Reading from the N-terminus, the 84-residue chain is Beta-mammal/insect toxin Ts1 (84 aa).

The N-terminal stretch at 1-20 is a signal peptide; the sequence is MKGMILFISCLLLIGIVVEC. Residues 21–82 enclose the LCN-type CS-alpha/beta domain; that stretch reads KEGYLMDHEG…VWDRATNKCG (62 aa). 4 cysteine pairs are disulfide-bonded: cysteine 31–cysteine 81, cysteine 35–cysteine 57, cysteine 43–cysteine 62, and cysteine 47–cysteine 64. Cysteine 81 bears the Cysteine amide mark.

The protein belongs to the long (4 C-C) scorpion toxin superfamily. Sodium channel inhibitor family. C-terminal amidation is important for high activity. Expressed by the venom gland.

The protein resides in the secreted. Functionally, voltage-gated sodium channels (Nav) gating-modifier. Acts both as alpha- and beta-toxin, since it affects not only activation but also inactivation of Nav channels. Binds to Nav domain DII and impairs the four Nav channel voltage sensors movements. Depending on Nav channel subtypes tested, can also bind Nav domains DIII (low affinity) and DIV (very low affinity). Acts on almost all the Nav channels tested (mammalian Nav1.2/SCN2A, Nav1.3/SCN3A, Nav1.4/SCN4A, Nav1.5/SCN5A, Nav1.6/SCN8A, Nav1.9/SCN11A, and insect DmNav1). Is highly active against both mammals and insects. Irreversibly modulates DmNav channels. Other Ts1 activities have been studied, such as immunomodulation, antimicrobial activity or exocrine secretion. This toxin exhibits an antifungal activity against filamentous fungi. In vitro, it has an important immunomodulatory effect on macrophages by stimulating the release of pro-inflammatory cytokines. It also shows an activity in exocrine secretion in pancreas, stomach and adrenal gland. The protein is Beta-mammal/insect toxin Ts1 of Tityus serrulatus (Brazilian scorpion).